Here is an 842-residue protein sequence, read N- to C-terminus: Elongation factor G, mitochondrial (842 aa).

The transit peptide at 1–58 (MVAIPRVAAARSLARQLARQSLRTTSFASAPVRIAIASTPLARSPSSFRSLSSSTRRS) directs the protein to the mitochondrion. The tr-type G domain maps to 93 to 398 (VRQRNVGISA…GVCSYLPNPA (306 aa)). Residues 102–109 (AHIDSGKT), 196–200 (DTPGH), and 250–253 (NKMD) contribute to the GTP site. The disordered stretch occupies residues 423–442 (AGEDQEAAAEARKNAAPPVL).

Belongs to the TRAFAC class translation factor GTPase superfamily. Classic translation factor GTPase family. EF-G/EF-2 subfamily.

The protein resides in the mitochondrion. It participates in protein biosynthesis; polypeptide chain elongation. Functionally, mitochondrial GTPase that catalyzes the GTP-dependent ribosomal translocation step during translation elongation. During this step, the ribosome changes from the pre-translocational (PRE) to the post-translocational (POST) state as the newly formed A-site-bound peptidyl-tRNA and P-site-bound deacylated tRNA move to the P and E sites, respectively. Catalyzes the coordinated movement of the two tRNA molecules, the mRNA and conformational changes in the ribosome. The polypeptide is Elongation factor G, mitochondrial (Mycosarcoma maydis (Corn smut fungus)).